The sequence spans 329 residues: Sex comb on midleg-like protein 1 (329 aa).

Phosphoserine is present on residues S138 and S238. The segment at 138–157 (SPTLPVSRRENNSPSNLPRP) is disordered. The SAM domain maps to 258 to 325 (WSVEAVVLFL…YYIDRLKQGK (68 aa)).

It belongs to the SCM family.

It is found in the nucleus. Putative Polycomb group (PcG) protein. PcG proteins act by forming multiprotein complexes, which are required to maintain the transcriptionally repressive state of homeotic genes throughout development. May be involved in spermatogenesis during sexual maturation. The sequence is that of Sex comb on midleg-like protein 1 (SCML1) from Pan troglodytes (Chimpanzee).